The sequence spans 405 residues: Tryptophan synthase beta chain (405 aa).

Lysine 98 carries the post-translational modification N6-(pyridoxal phosphate)lysine.

Belongs to the TrpB family. In terms of assembly, tetramer of two alpha and two beta chains. The cofactor is pyridoxal 5'-phosphate.

The catalysed reaction is (1S,2R)-1-C-(indol-3-yl)glycerol 3-phosphate + L-serine = D-glyceraldehyde 3-phosphate + L-tryptophan + H2O. The protein operates within amino-acid biosynthesis; L-tryptophan biosynthesis; L-tryptophan from chorismate: step 5/5. Functionally, the beta subunit is responsible for the synthesis of L-tryptophan from indole and L-serine. The chain is Tryptophan synthase beta chain (trpB) from Xylella fastidiosa (strain 9a5c).